A 280-amino-acid polypeptide reads, in one-letter code: Late embryogenesis abundant protein M17 (280 aa).

The signal sequence occupies residues 1–22; the sequence is MGNLKSLVLLALLFSFSVAVFA. N-linked (GlcNAc...) asparagine glycosylation is present at N23. A run of 2 repeats spans residues 76 to 97 and 131 to 152. The 4 X 22 AA repeats, Cys-rich stretch occupies residues 76 to 262; that stretch reads GGCRWGCCGG…RGRCRYCCRS (187 aa). A disordered region spans residues 163 to 184; sequence VEPNDVEPQQGGRGGGGGGGGG. The segment covering 173–184 has biased composition (gly residues); it reads GGRGGGGGGGGG. The stretch at 186–207 is repeat 3; the sequence is GGCRWGCCGGWWRGRCRYCCRS. The disordered stretch occupies residues 218-239; the sequence is VEPNDVEPQQGGRGGGGGGGGG. Gly residues predominate over residues 228-239; the sequence is GGRGGGGGGGGG. The stretch at 241–262 is repeat 4; that stretch reads GGCRWGCCGGWWRGRCRYCCRS.

In terms of biological role, may be involved in the acquisition of desiccation tolerance during late phase of embryogenesis. This is Late embryogenesis abundant protein M17 from Arabidopsis thaliana (Mouse-ear cress).